We begin with the raw amino-acid sequence, 136 residues long: Small ribosomal subunit protein bS6 (136 aa).

The interval 96–136 is disordered; the sequence is VTEPSALARSGSDAEADRAPADEGSVEAAGAEPGSEAEAEA.

Belongs to the bacterial ribosomal protein bS6 family.

In terms of biological role, binds together with bS18 to 16S ribosomal RNA. This is Small ribosomal subunit protein bS6 from Methylococcus capsulatus (strain ATCC 33009 / NCIMB 11132 / Bath).